Reading from the N-terminus, the 385-residue chain is Putative transport protein MT1133 (385 aa).

8 helical membrane-spanning segments follow: residues 7 to 27 (LTQK…GAYF), 32 to 52 (FVLI…FKWF), 66 to 86 (LLSA…LAIV), 159 to 179 (SLAG…ALLV), 218 to 238 (FVIA…AGFH), 241 to 261 (FFIF…GGIV), 263 to 283 (IPFG…FVLL), and 319 to 339 (GITM…ILIV).

It belongs to the autoinducer-2 exporter (AI-2E) (TC 2.A.86) family.

The protein resides in the cell membrane. In Mycobacterium tuberculosis (strain CDC 1551 / Oshkosh), this protein is Putative transport protein MT1133.